The sequence spans 1196 residues: Ice nucleation protein (1196 aa).

The interval 172-1147 is octapeptide periodicity; it reads ATYGSTLSGD…LSAGEDSTLI (976 aa). Disordered regions lie at residues 269–304, 319–352, and 415–442; these read GYGS…GYGS, GSTQ…GYGS, and GSTQ…GSNL. Composition is skewed to polar residues over residues 271–298 and 319–346; these read GSTQ…GSNL.

Belongs to the bacterial ice nucleation protein family. Membrane environment or aggregation seems to be required for ice nucleation activity.

It localises to the cell outer membrane. Functionally, ice nucleation proteins enable bacteria to nucleate crystallization in supercooled water. The polypeptide is Ice nucleation protein (inaV) (Pseudomonas syringae).